Consider the following 322-residue polypeptide: Major serine/threonine-protein phosphatase PP2A-2 catalytic subunit (322 aa).

4 residues coordinate Mn(2+): Asp70, His72, Asp98, and Asn130. Catalysis depends on His131, which acts as the Proton donor. 2 residues coordinate Mn(2+): His180 and His254. The residue at position 322 (Leu322) is a Leucine methyl ester.

The protein belongs to the PPP phosphatase family. PP-2A subfamily. Mn(2+) is required as a cofactor.

The enzyme catalyses O-phospho-L-seryl-[protein] + H2O = L-seryl-[protein] + phosphate. The catalysed reaction is O-phospho-L-threonyl-[protein] + H2O = L-threonyl-[protein] + phosphate. Essential role in cell cycle control. PP2A may be involved in controlling the entry into mitosis, possibly acting as an inhibitor. This is Major serine/threonine-protein phosphatase PP2A-2 catalytic subunit (ppa2) from Schizosaccharomyces pombe (strain 972 / ATCC 24843) (Fission yeast).